We begin with the raw amino-acid sequence, 397 residues long: MVVKKTFVLSTLILISVVALVSTAVYTSGNVTFYSPSVNNQIYYVGKSVTIDAVVPQQFAGQGAVINLFFPNSTLAASIPTTVNATGGIYVPNAYTFPHVIGIWQITVEVTGGVAVGTIDVNVTTPAVAPIILTLQNLAMYENTYPQFIEFANGIITSVVMQNGTVNIMGYVYNSTVGPLSGATVSLTLNIPTVGTKTLSTTTASNGSFMLSFQVPQLSTTLTLISSYLISGSLTVSYGVHTVTYNVFITAIPNYLSVINALNNEVSTLRSEISSLNSTIASLNKSLANANTQISNLQSEITTLNSEIGKLNSTVGSLSTQLSSLSSQYNTLSSQVTALNGKISNLSTSLSTLNGEVASLRSTVSSLTTIAYGGIIAGIIGLIVAIVAIVLVMRRIS.

An N-terminal signal peptide occupies residues 1–24 (MVVKKTFVLSTLILISVVALVSTA). Residues 259-314 (INALNNEVSTLRSEISSLNSTIASLNKSLANANTQISNLQSEITTLNSEIGKLNST) are a coiled coil. The chain crosses the membrane as a helical span at residues 373-393 (GGIIAGIIGLIVAIVAIVLVM).

It belongs to the Sulfolobales SlaB family. The mushroom-shaped unit cells of the Sulfolobales' S-layers may consist of three SlaB subunits and six SlaA subunits.

The protein resides in the secreted. Its subcellular location is the cell wall. It is found in the S-layer. The protein localises to the cell membrane. S-layer small protein. May anchor the complex to the cell membrane. The sequence is that of S-layer protein B from Saccharolobus solfataricus (strain ATCC 35092 / DSM 1617 / JCM 11322 / P2) (Sulfolobus solfataricus).